A 115-amino-acid chain; its full sequence is Mobilization protein MbeC (115 aa).

To E.coli MbaC and MbkC. Homodimer. Interacts with MbeA and MbeB to form the relaxosome.

Its function is as follows. Required for efficient mobilization of ColE1 plasmid and is thus essential to promote the specific transfer of the plasmid during conjugation. Probably functions by inducing DNA bending, helping the MbeA relaxase to melt the DNA around the nic site and cleave the phosphodiester bond. Binds specifically double-stranded DNA (dsDNA) containing the ColE1 oriT but does not recognize the inverted repeat (IR). The protein is Mobilization protein MbeC (mbeC) of Escherichia coli.